The sequence spans 533 residues: DNA primase large subunit (533 aa).

[4Fe-4S] cluster is bound by residues Cys-298, Cys-377, Cys-393, and Cys-433. A disordered region spans residues 466-492 (RQKRANGSAPPKARIRPDIKGHGDRSM). A compositionally biased stretch (basic and acidic residues) spans 480 to 490 (IRPDIKGHGDR).

This sequence belongs to the eukaryotic-type primase large subunit family. As to quaternary structure, heterodimer of a catalytic subunit Prim1 and a regulatory subunit Prim2, also known as the DNA primase complex. Component of the alpha DNA polymerase complex (also known as the alpha DNA polymerase-primase complex) consisting of four subunits: the catalytic subunit PolA1, the regulatory subunit PolA2, and the primase complex subunits Prim1 and Prim2 respectively. PolA1 associates with the DNA primase complex before association with PolA2. [4Fe-4S] cluster serves as cofactor. As to expression, expressed in embryos (at protein level).

Functionally, regulatory subunit of the DNA primase complex and component of the DNA polymerase alpha complex (also known as the alpha DNA polymerase-primase complex) which play an essential role in the initiation of DNA synthesis. During the S phase of the cell cycle, the DNA polymerase alpha complex (composed of a catalytic subunit PolA1, an accessory subunit PolA2 and two primase subunits, the catalytic subunit Prim1 and the regulatory subunit Prim2) is recruited to DNA at the replicative forks. The primase subunit of the polymerase alpha complex initiates DNA synthesis by oligomerising short RNA primers on both leading and lagging strands. These primers are initially extended by the polymerase alpha catalytic subunit and subsequently transferred to polymerase delta and polymerase epsilon for processive synthesis on the lagging and leading strand, respectively. In the primase complex, both subunits are necessary for the initial di-nucleotide formation, but the extension of the primer depends only on the catalytic subunit. Stabilizes and modulates the activity of the catalytic subunit. The protein is DNA primase large subunit of Drosophila melanogaster (Fruit fly).